Consider the following 450-residue polypeptide: Sorting nexin-4 (450 aa).

Methionine 1 carries the N-acetylmethionine modification. Positions 1–46 (MEQAPPDPERQLQPAPLEPLGSPDAGLGAAVGKEAEGAGEESSGVD) are disordered. At serine 22 the chain carries Phosphoserine. Positions 61–187 (SVSEAEKRTG…YLFLTQEGNW (127 aa)) constitute a PX domain. Residues arginine 106, serine 108, lysine 132, and arginine 154 each contribute to the a 1,2-diacyl-sn-glycero-3-phospho-(1D-myo-inositol-3-phosphate) site.

This sequence belongs to the sorting nexin family. As to quaternary structure, heterodimer; heterodimerizes with SNX7 or SNX30. Interacts with WWC1/KIBRA. Identified in a complex with WWC1/KIBRA and dynein components DYNLL1 and DYNC1I2. Interacts with BIN1.

The protein localises to the early endosome membrane. Functionally, involved in the regulation of endocytosis and in several stages of intracellular trafficking. Plays a role in recycling endocytosed transferrin receptor and prevent its degradation. Involved in autophagosome assembly by regulating trafficking and recycling of phospholipid scramblase ATG9A. The chain is Sorting nexin-4 from Homo sapiens (Human).